Consider the following 588-residue polypeptide: UDP-N-acetylmuramate--L-alanine ligase (588 aa).

119-125 (GSHGKST) serves as a coordination point for ATP. Residues 344-371 (VPAAAGAAAAPPVRRDPATAAAAATTAP) are compositionally biased toward low complexity. Residues 344–411 (VPAAAGAAAA…APAAGPDHAA (68 aa)) form a disordered region. The span at 372 to 381 (IGPPDSPPPT) shows a compositional bias: pro residues. Positions 382 to 411 (GIALPRAAPPAVDAPVAATPAPAAGPDHAA) are enriched in low complexity.

The protein belongs to the MurCDEF family.

The protein localises to the cytoplasm. It catalyses the reaction UDP-N-acetyl-alpha-D-muramate + L-alanine + ATP = UDP-N-acetyl-alpha-D-muramoyl-L-alanine + ADP + phosphate + H(+). Its pathway is cell wall biogenesis; peptidoglycan biosynthesis. Functionally, cell wall formation. In Frankia alni (strain DSM 45986 / CECT 9034 / ACN14a), this protein is UDP-N-acetylmuramate--L-alanine ligase.